Here is a 184-residue protein sequence, read N- to C-terminus: Ribosome-recycling factor (184 aa).

This sequence belongs to the RRF family.

It is found in the cytoplasm. Its function is as follows. Responsible for the release of ribosomes from messenger RNA at the termination of protein biosynthesis. May increase the efficiency of translation by recycling ribosomes from one round of translation to another. The polypeptide is Ribosome-recycling factor (Borrelia turicatae (strain 91E135)).